The primary structure comprises 342 residues: Anthranilate phosphoribosyltransferase (342 aa).

5-phospho-alpha-D-ribose 1-diphosphate-binding positions include G81, 84–85 (GD), T89, 91–94 (NIST), 109–117 (KHGNRALSS), and T121. Residue G81 coordinates anthranilate. S93 is a binding site for Mg(2+). Residue N112 participates in anthranilate binding. R167 provides a ligand contact to anthranilate. D225 and E226 together coordinate Mg(2+).

The protein belongs to the anthranilate phosphoribosyltransferase family. Homodimer. The cofactor is Mg(2+).

The enzyme catalyses N-(5-phospho-beta-D-ribosyl)anthranilate + diphosphate = 5-phospho-alpha-D-ribose 1-diphosphate + anthranilate. Its pathway is amino-acid biosynthesis; L-tryptophan biosynthesis; L-tryptophan from chorismate: step 2/5. Functionally, catalyzes the transfer of the phosphoribosyl group of 5-phosphorylribose-1-pyrophosphate (PRPP) to anthranilate to yield N-(5'-phosphoribosyl)-anthranilate (PRA). The polypeptide is Anthranilate phosphoribosyltransferase (Agrobacterium fabrum (strain C58 / ATCC 33970) (Agrobacterium tumefaciens (strain C58))).